A 167-amino-acid chain; its full sequence is Peptidyl-prolyl cis-trans isomerase-like 3 (167 aa).

The PPIase cyclophilin-type domain occupies 1-153 (MSVTLHTNLG…QEIKLLNVTV (153 aa)).

This sequence belongs to the cyclophilin-type PPIase family. PPIL3 subfamily.

It catalyses the reaction [protein]-peptidylproline (omega=180) = [protein]-peptidylproline (omega=0). PPIases accelerate the folding of proteins. It catalyzes the cis-trans isomerization of proline imidic peptide bonds in oligopeptides. In Cryptococcus neoformans var. neoformans serotype D (strain B-3501A) (Filobasidiella neoformans), this protein is Peptidyl-prolyl cis-trans isomerase-like 3 (CYP10).